A 356-amino-acid chain; its full sequence is Probable arabinogalactan endo-beta-1,4-galactanase A (356 aa).

Residues 1-21 (MLGKTVLLPLLVLLCHSLASA) form the signal peptide. Asn133 carries N-linked (GlcNAc...) asparagine glycosylation. The Proton donor role is filled by Glu157. The Nucleophile role is filled by Glu268.

This sequence belongs to the glycosyl hydrolase 53 family.

Its subcellular location is the secreted. The enzyme catalyses The enzyme specifically hydrolyzes (1-&gt;4)-beta-D-galactosidic linkages in type I arabinogalactans.. In terms of biological role, endogalactanase involved in the degradation of plant cell wall polysaccharides, and more particularly of hairy regions of pectin. This is Probable arabinogalactan endo-beta-1,4-galactanase A (galA) from Aspergillus fumigatus (strain ATCC MYA-4609 / CBS 101355 / FGSC A1100 / Af293) (Neosartorya fumigata).